We begin with the raw amino-acid sequence, 97 residues long: MALLVSAYKSAKKDELYLFVPKEDGLEKLSDELLVMFGEPQHVIDFDLTEKRKLARVDAEEVKKALETKGYFMQMPPSEIEKMGDMPPPPEHLDNIF.

Residues Leu-3–Pro-87 form the YcgL domain. A disordered region spans residues Ser-78–Phe-97.

The protein is YcgL domain-containing protein Tcr_0238 of Hydrogenovibrio crunogenus (strain DSM 25203 / XCL-2) (Thiomicrospira crunogena).